The primary structure comprises 230 residues: Preflagellin peptidase (230 aa).

Position 1 (M1) is a topological domain, cytoplasmic. Residues 2-18 (IEYIIGALGLIIASVQD) traverse the membrane as a helical segment. Over 19–23 (FRSRE) the chain is Extracellular. Residues 24–46 (IEDYIWIFLAVFGVLFAIYSSIT) traverse the membrane as a helical segment. The Cytoplasmic segment spans residues 47–49 (LLD). Residues 50–72 (YSILINSISGFVICFILGYMMFL) traverse the membrane as a helical segment. Topologically, residues 73–78 (SGIGGG) are extracellular. Residues 79–89 (DGKMLIGLGAL) form a helical membrane-spanning segment. At 90-110 (VPKFQMPIYTSLGTLLNLNYV) the chain is on the cytoplasmic side. Residues 111-139 (PTFPIMVFINGIFFMVFLPFVILFRNILN) form a helical membrane-spanning segment. The Extracellular portion of the chain corresponds to 140 to 204 (GARPKTGKEF…EEIWVTPQIP (65 aa)). A helical membrane pass occupies residues 205 to 216 (LIIPITLSYLVT). The Cytoplasmic segment spans residues 217-230 (PIIGDRILDFLIPF).

This sequence belongs to the peptidase A24 family. Archaeal preflagellin peptidase subfamily.

The protein resides in the cell membrane. The catalysed reaction is Cleaves the signal peptide of 3 to 12 amino acids from the N-terminal of preflagellin, usually at Arg-Gly-|- or Lys-Gly-|-, to release flagellin.. Its function is as follows. Cleaves the N-terminal leader peptide from preflagellins. This chain is Preflagellin peptidase (flaK), found in Methanococcus maripaludis (strain C6 / ATCC BAA-1332).